A 256-amino-acid polypeptide reads, in one-letter code: Tyrosine-protein kinase-interacting protein (256 aa).

Residues 1-14 are compositionally biased toward acidic residues; that stretch reads MANEGEEIELTEFP. The disordered stretch occupies residues 1–49; that stretch reads MANEGEEIELTEFPETEKERKDEEKLSSCSEETTNTSSSSGSDHVPVPI. At 1–228 the chain is on the cytoplasmic side; sequence MANEGEEIEL…DLKRLENKIN (228 aa). The span at 15–26 shows a compositional bias: basic and acidic residues; that stretch reads ETEKERKDEEKL. Residues 27–42 show a composition bias toward low complexity; that stretch reads SSCSEETTNTSSSSGS. Tyr114 is subject to Phosphotyrosine; by host LCK. The residue at position 127 (Tyr127) is a Phosphotyrosine; by host. The CSKH/LBD2 stretch occupies residues 146–155; that stretch reads EDLQSFLEKY. A disordered region spans residues 162–183; it reads PKRDLSATWDPGMPTPPLPPRP. The interval 174 to 183 is SH3B/LBD1; that stretch reads MPTPPLPPRP. Residues 174–183 show a composition bias toward pro residues; the sequence is MPTPPLPPRP. A helical membrane pass occupies residues 229–249; the sequence is VIICLVVVILAVLLLVTVLSI. The Extracellular portion of the chain corresponds to 250–256; it reads LHIGMKS.

As to quaternary structure, binds host LCK, human WDR48 and human NXF1/TAP. Forms a complex with activated LCK and STAT1 and STAT3. In terms of processing, phosphorylation on Tyr-114 acts as a docking site for the recruitment of STATs 1 and 3.

The protein resides in the host cell membrane. Functionally, plays a critical role in virus induced T-cell transformation. Binds to T-cell-specific tyrosine kinase LCK SH2 and SH3 domains, thereby activating its kinase activity. Once phosphorylated by host LCK, forms a complex with at least STAT 1 and 3, resulting on the phosphorylation of STAT3 and presumably STAT1, and their migration into the nucleus to induce transcription of target genes. Stimulates host ILF3/NF-AT-90 activity. Association with host NXF1/TAP transduces the signal up-regulating surface expression of adhesion molecules as well as activating NF-kappa-B activity. Acts synergistically with StpC to stimulate NF-kappa-B activity and interleukin-2 gene expression. Activation of NF-kappa-B protects lymphocytes from apoptosis, thereby facilitating viral induced cell transformation. May cause down-regulation of host LCK and cell apoptosis when stably overexpressed ex vivo. Interaction with WDR48 induce degradation of T-cell receptor in a lysosome-dependent fashion, when both proteins are overexpressed. The biological effect of this interaction remains controversial since no T-cell receptor degradation is observed in infected cells. The protein is Tyrosine-protein kinase-interacting protein of Saimiri sciureus (Common squirrel monkey).